We begin with the raw amino-acid sequence, 350 residues long: MDLTVEPNLKSLITSSTHKWIFVGGKGGVGKTTSSCSIAIQMALAQPHKKFLLISTDPAHNLSDAFGEKFDKDARKVTGMDNLSCMEIDPSAALKDMNDMAVSSAGENGNDDLGGLLQGGALADLTGSIPGIDEALSFMEVMKHIKKQEQGDGESFDTVIFDTAPTGHTLRFLQLPTTLSKLLDKFSEITGRLGPMLNSMMGSGNVDIAGKLNELKANVETIKEQFTDPDLTTFVCVCISEFLSLYETERLIQELISYDMDVNSIIVNQLLFAEFDQEHNCKRCQSRWKMQKKYLDQIDELYEDFHVVKMPLCAGEIRGLNNLKKFSQFLFKEYDPVADNTVIYELEEKN.

26–33 provides a ligand contact to ATP; that stretch reads KGGVGKTT. Asp-57 is an active-site residue. 2 residues coordinate ATP: Glu-241 and Asn-268. Positions 281 and 284 each coordinate Zn(2+).

This sequence belongs to the arsA ATPase family. In terms of assembly, homodimer. Component of the Golgi to ER traffic (GET) complex, which is composed of GET1, GET2 and GET3. Within the complex, GET1 and GET2 form a heterotetramer which is stabilized by phosphatidylinositol binding and which binds to the GET3 homodimer. Interacts with the chloride channel protein GEF1.

It is found in the cytoplasm. The protein resides in the endoplasmic reticulum. Its subcellular location is the golgi apparatus. Its function is as follows. ATPase required for the post-translational delivery of tail-anchored (TA) proteins to the endoplasmic reticulum. Recognizes and selectively binds the transmembrane domain of TA proteins in the cytosol. This complex then targets to the endoplasmic reticulum by membrane-bound receptors GET1 and GET2, where the tail-anchored protein is released for insertion. This process is regulated by ATP binding and hydrolysis. ATP binding drives the homodimer towards the closed dimer state, facilitating recognition of newly synthesized TA membrane proteins. ATP hydrolysis is required for insertion. Subsequently, the homodimer reverts towards the open dimer state, lowering its affinity for the GET1-GET2 receptor, and returning it to the cytosol to initiate a new round of targeting. Cooperates with the HDEL receptor ERD2 to mediate the ATP-dependent retrieval of resident ER proteins that contain a C-terminal H-D-E-L retention signal from the Golgi to the ER. Involved in low-level resistance to the oxyanions arsenite and arsenate, and in heat tolerance. The polypeptide is ATPase GET3 (Candida glabrata (strain ATCC 2001 / BCRC 20586 / JCM 3761 / NBRC 0622 / NRRL Y-65 / CBS 138) (Yeast)).